An 86-amino-acid polypeptide reads, in one-letter code: Co-chaperonin GroES (86 aa).

Belongs to the GroES chaperonin family. In terms of assembly, heptamer of 7 subunits arranged in a ring. Interacts with the chaperonin GroEL.

The protein resides in the cytoplasm. Its function is as follows. Together with the chaperonin GroEL, plays an essential role in assisting protein folding. The GroEL-GroES system forms a nano-cage that allows encapsulation of the non-native substrate proteins and provides a physical environment optimized to promote and accelerate protein folding. GroES binds to the apical surface of the GroEL ring, thereby capping the opening of the GroEL channel. The polypeptide is Co-chaperonin GroES (Campylobacter curvus (strain 525.92)).